The primary structure comprises 149 residues: Small ribosomal subunit protein bS16 (149 aa).

Residues 115-149 (KLKAAKSEADAKAKAEAEAAATEEAPAEEPAAEAE) are disordered. Positions 119–131 (AKSEADAKAKAEA) are enriched in basic and acidic residues. A compositionally biased stretch (acidic residues) spans 139-149 (APAEEPAAEAE).

Belongs to the bacterial ribosomal protein bS16 family.

The sequence is that of Small ribosomal subunit protein bS16 from Bifidobacterium adolescentis (strain ATCC 15703 / DSM 20083 / NCTC 11814 / E194a).